The following is a 261-amino-acid chain: Precorrin-6A reductase (261 aa).

It belongs to the precorrin-6x reductase family.

It catalyses the reaction precorrin-6B + NADP(+) = precorrin-6A + NADPH + 2 H(+). Its pathway is cofactor biosynthesis; adenosylcobalamin biosynthesis; cob(II)yrinate a,c-diamide from precorrin-2 (aerobic route): step 6/10. Its function is as follows. Catalyzes the reduction of the macrocycle of precorrin-6X into precorrin-6Y. This is Precorrin-6A reductase (cobK) from Sinorhizobium sp.